The following is a 392-amino-acid chain: Putative cystathionine gamma-lyase 2 (392 aa).

A disordered region spans residues leucine 32–proline 55. Positions asparagine 40–serine 50 are enriched in basic and acidic residues. 3 residues coordinate substrate: arginine 51, tyrosine 103, and arginine 108. Lysine 203 bears the N6-(pyridoxal phosphate)lysine mark. Residue glutamate 330 coordinates substrate.

It belongs to the trans-sulfuration enzymes family. Pyridoxal 5'-phosphate is required as a cofactor.

Its subcellular location is the cytoplasm. The enzyme catalyses L,L-cystathionine + H2O = 2-oxobutanoate + L-cysteine + NH4(+). The protein operates within amino-acid biosynthesis; L-cysteine biosynthesis; L-cysteine from L-homocysteine and L-serine: step 2/2. The chain is Putative cystathionine gamma-lyase 2 (cth-2) from Caenorhabditis elegans.